The sequence spans 138 residues: Cellular retinoic acid-binding protein 2 (138 aa).

Positions 21 to 31 (KALGVNMMMRK) match the Nuclear localization signal motif. Lys102 is covalently cross-linked (Glycyl lysine isopeptide (Lys-Gly) (interchain with G-Cter in SUMO)). 133–135 (RVY) contacts all-trans-retinoate.

Belongs to the calycin superfamily. Fatty-acid binding protein (FABP) family. In terms of assembly, interacts with importin alpha. Interacts with RXR and RARA. Post-translationally, sumoylated in response to retinoic acid binding, sumoylation is critical for dissociation from ER and subsequent nuclear translocation. Embryo and skin of adult mouse.

The protein resides in the cytoplasm. The protein localises to the endoplasmic reticulum. It localises to the nucleus. In terms of biological role, transports retinoic acid to the nucleus. Regulates the access of retinoic acid to the nuclear retinoic acid receptors. The protein is Cellular retinoic acid-binding protein 2 (Crabp2) of Mus musculus (Mouse).